The chain runs to 377 residues: Probable pectin lyase D (377 aa).

The signal sequence occupies residues 1 to 17; sequence MRVSAFALLAAAATAAA. Intrachain disulfides connect Cys80-Cys99 and Cys89-Cys223. Asn126 is a glycosylation site (N-linked (GlcNAc...) asparagine). Arg253 is a catalytic residue. A disulfide bridge connects residues Cys321 and Cys329.

Belongs to the polysaccharide lyase 1 family.

It is found in the secreted. It catalyses the reaction Eliminative cleavage of (1-&gt;4)-alpha-D-galacturonan methyl ester to give oligosaccharides with 4-deoxy-6-O-methyl-alpha-D-galact-4-enuronosyl groups at their non-reducing ends.. Its function is as follows. Pectinolytic enzymes consist of four classes of enzymes: pectin lyase, polygalacturonase, pectin methylesterase and rhamnogalacturonase. Among pectinolytic enzymes, pectin lyase is the most important in depolymerization of pectin, since it cleaves internal glycosidic bonds of highly methylated pectins. The chain is Probable pectin lyase D (pelD) from Emericella nidulans (strain FGSC A4 / ATCC 38163 / CBS 112.46 / NRRL 194 / M139) (Aspergillus nidulans).